Here is a 343-residue protein sequence, read N- to C-terminus: Ricin B-like lectin R40G2 (343 aa).

The Ricin B-type lectin domain occupies 194-340 (TVRVFSAAGE…CEGDNQRWKI (147 aa)).

Its function is as follows. Lectin which binds carbohydrates in vitro. Interacts through its lectin domain with glycan structures containing specific motifs. In Oryza sativa subsp. japonica (Rice), this protein is Ricin B-like lectin R40G2.